Reading from the N-terminus, the 128-residue chain is Holo-[acyl-carrier-protein] synthase (128 aa).

The Mg(2+) site is built by D7 and E55.

Belongs to the P-Pant transferase superfamily. AcpS family. Requires Mg(2+) as cofactor.

Its subcellular location is the cytoplasm. It carries out the reaction apo-[ACP] + CoA = holo-[ACP] + adenosine 3',5'-bisphosphate + H(+). Functionally, transfers the 4'-phosphopantetheine moiety from coenzyme A to a Ser of acyl-carrier-protein. The sequence is that of Holo-[acyl-carrier-protein] synthase from Moorella thermoacetica (strain ATCC 39073 / JCM 9320).